Consider the following 81-residue polypeptide: Photosystem I iron-sulfur center (81 aa).

2 consecutive 4Fe-4S ferredoxin-type domains span residues 2–31 and 39–68; these read SHSV…MVPW and IASA…VRVY. C11, C14, C17, C21, C48, C51, C54, and C58 together coordinate [4Fe-4S] cluster.

In terms of assembly, the eukaryotic PSI reaction center is composed of at least 11 subunits. It depends on [4Fe-4S] cluster as a cofactor.

It localises to the plastid. It is found in the chloroplast thylakoid membrane. The catalysed reaction is reduced [plastocyanin] + hnu + oxidized [2Fe-2S]-[ferredoxin] = oxidized [plastocyanin] + reduced [2Fe-2S]-[ferredoxin]. Functionally, apoprotein for the two 4Fe-4S centers FA and FB of photosystem I (PSI); essential for photochemical activity. FB is the terminal electron acceptor of PSI, donating electrons to ferredoxin. The C-terminus interacts with PsaA/B/D and helps assemble the protein into the PSI complex. Required for binding of PsaD and PsaE to PSI. PSI is a plastocyanin/cytochrome c6-ferredoxin oxidoreductase, converting photonic excitation into a charge separation, which transfers an electron from the donor P700 chlorophyll pair to the spectroscopically characterized acceptors A0, A1, FX, FA and FB in turn. This Emiliania huxleyi (Coccolithophore) protein is Photosystem I iron-sulfur center.